The sequence spans 519 residues: Ion-translocating oxidoreductase complex subunit C (519 aa).

2 4Fe-4S ferredoxin-type domains span residues 372–401 (ETPE…FELN) and 411–440 (GAAK…VQSF). The [4Fe-4S] cluster site is built by cysteine 381, cysteine 384, cysteine 387, cysteine 391, cysteine 420, cysteine 423, cysteine 426, and cysteine 430. The segment at 494–519 (KAEEAAAAAAMPPPATATAIQGEATP) is disordered.

Belongs to the 4Fe4S bacterial-type ferredoxin family. RnfC subfamily. The complex is composed of six subunits: RnfA, RnfB, RnfC, RnfD, RnfE and RnfG. Requires [4Fe-4S] cluster as cofactor.

The protein localises to the cellular chromatophore membrane. Its function is as follows. Part of a membrane-bound complex that couples electron transfer with translocation of ions across the membrane. Required for nitrogen fixation. Involved in electron transfer to nitrogenase. The protein is Ion-translocating oxidoreductase complex subunit C of Rhodobacter capsulatus (Rhodopseudomonas capsulata).